Consider the following 181-residue polypeptide: UPF0232 protein MAP_0004 (181 aa).

Polar residues predominate over residues 1-11; it reads MSDDQSPSPSG. 2 disordered regions span residues 1 to 70 and 161 to 181; these read MSDD…PQPL and APSW…DTYG. Basic and acidic residues predominate over residues 18–39; that stretch reads LVRRTLEEARAAARAQGKDAGR. Positions 40 to 50 are enriched in low complexity; the sequence is GRAAAPTPRRV.

This sequence belongs to the UPF0232 family.

The polypeptide is UPF0232 protein MAP_0004 (Mycolicibacterium paratuberculosis (strain ATCC BAA-968 / K-10) (Mycobacterium paratuberculosis)).